The chain runs to 485 residues: GTPase Obg (485 aa).

One can recognise an Obg domain in the interval 2–159; the sequence is SKFIDRVVLH…RDLVLELKSV (158 aa). The segment at 64 to 84 is disordered; sequence PHAKAGNGKPGEGGNRDGKMG. The region spanning 160 to 340 is the OBG-type G domain; that stretch reads ADVGLVGFPS…LTFALADLVR (181 aa). Residues 166–173, 191–195, 212–215, 292–295, and 321–323 each bind GTP; these read GFPSAGKS, FTTLV, DVPG, NKTD, and SAV. Mg(2+) contacts are provided by S173 and T193. Positions 358 to 438 constitute an OCT domain; sequence PIAVDESGFT…IGDVTFDWEP (81 aa). A compositionally biased stretch (basic and acidic residues) spans 457–469; it reads LEQSDRVSAAERK. The interval 457-485 is disordered; that stretch reads LEQSDRVSAAERKHASRVRRGLVEDDEQR.

The protein belongs to the TRAFAC class OBG-HflX-like GTPase superfamily. OBG GTPase family. As to quaternary structure, monomer. The cofactor is Mg(2+).

It is found in the cytoplasm. An essential GTPase which binds GTP, GDP and possibly (p)ppGpp with moderate affinity, with high nucleotide exchange rates and a fairly low GTP hydrolysis rate. Plays a role in control of the cell cycle, stress response, ribosome biogenesis and in those bacteria that undergo differentiation, in morphogenesis control. This is GTPase Obg from Nocardia farcinica (strain IFM 10152).